The chain runs to 260 residues: MDGWQRAFVLHARPYSETSLLLDFFTEQQGRVRVLAKGARSRRSALKGVLQPFTPLLARWSGRGEVKTLRSAEPVSLGLPLSGLMLYSGLYINELLSRVLDHETDYSKLFYDYLHCLQWLAGATGSPEPALRRFELALLSHLGYGVDFLHCAGSGEPVDDAMTYRYREEKGFTASVLLDRYSFSGRELRALAEGEFPDIDTLRAAKRFTRMALKPYLGGKPLKSHELFRQFLDRRPQASAGVAAARKAGGDGSDGDEGEQ.

A disordered region spans residues 239–260 (SAGVAAARKAGGDGSDGDEGEQ).

This sequence belongs to the RecO family.

Functionally, involved in DNA repair and RecF pathway recombination. This chain is DNA repair protein RecO, found in Sodalis glossinidius (strain morsitans).